Consider the following 92-residue polypeptide: UPF0250 protein XF_1271 (92 aa).

The protein belongs to the UPF0250 family.

This chain is UPF0250 protein XF_1271, found in Xylella fastidiosa (strain 9a5c).